The following is a 214-amino-acid chain: Adenylate kinase (214 aa).

10–15 (GAGKGT) contributes to the ATP binding site. Residues 30–59 (STGDMLRAAVKAQTPVGLKAKAVMDRGELV) form an NMP region. Residues T31, R36, 57-59 (ELV), 85-88 (GYPR), and Q92 contribute to the AMP site. The segment at 126–163 (GRFTCAKCGTGYHDRHKQPAREGVCDVCGSTEFKRRPD) is LID. R127 contacts ATP. Zn(2+) is bound by residues C130, C133, C150, and C153. The AMP site is built by R160 and R172. Position 200 (G200) interacts with ATP.

It belongs to the adenylate kinase family. In terms of assembly, monomer.

It localises to the cytoplasm. The enzyme catalyses AMP + ATP = 2 ADP. It functions in the pathway purine metabolism; AMP biosynthesis via salvage pathway; AMP from ADP: step 1/1. Functionally, catalyzes the reversible transfer of the terminal phosphate group between ATP and AMP. Plays an important role in cellular energy homeostasis and in adenine nucleotide metabolism. The polypeptide is Adenylate kinase (Erythrobacter litoralis (strain HTCC2594)).